The sequence spans 2697 residues: MLQQHGISFQMNADRQNKAATTSNRIVSAPATNEFDERHRKQGIDAARALASQYRSRITENRDANQRQAARELSRYVRSELKDEPNTFSDAFLNAIDGRTDIASQSAIYNCMKSNSNIDQKRAGIYLIVCLAETHSGNVIRYANYLLKMLNNGNGLDEDTVKMASKALAFLIATCKSYAAELVDRCLDHCHEWLGQNVPHSQQPKNQQEIDQIRRLAASHLSRELALATPTAFFLRVNLFFKYIFNAVRDKNPAVRIAGIDALHVVLTIVSQREAKNKTEWFKKCFDEALEGQPNPSQKDDLDRWHAVALILNELLRISDQRFELIRCESSQFIKQKFLKEDEEEGVEWLVLTKQQTIVESVTARKLVLERFPKILDCVRQIIPLANKTSSTKQQSSIYLNTVLMQLLPRICAFPQCDRTFQTISFDTSFTILQRNAVAAPAIGMMMLSNPDVHATHIEKTISFISAAIKKTTNSDVLDNYFTFLFLFVDAYHEQVTTQIKAIIPQLMDITLSRSLANVLKMIMMRIPKLRLNVQDGVMASVYQTLTGSLIPPKSEPIGRPASPKAILQKAETDPKELQRIVLAVDVLGEFYFSRGALQRIMQYVADYYLTADNVEIRLAAVSSCCEMVVPFVGVYKKVTSDKRNSLLQTIYGVLRAVCSVIVNDQDVRVRMQVISCFGQMPRPFLAHLAQPEMLEVQFMALHDEKLEMQQACVTLLGRLAELNPALVLPRLRLMLLETLSQMQQSGQARLEQHSAKMIAQLAKQSPKFMRPYVGSLMIAMIPKLRNDQKYAEVTAQVLNAVSEIAVIGGAEIVKNLKPLFEKLTHMINDSSSLHKREAALRAIGGICRSTAYVVDPYRDYPSLLDDLLRILKTVMSNTMRREAIKTLGILGAIDPYTHKVFTGSVQSSTAISTALSLPISETDSKDPRQDIIHWFNYEKCTLEEFYPAITIANLMLMMQDEDSQSYAEIAQAIVTIFRSLGDMAPLYTEQVIPRLIEVCRRATESSNRANLREFFLQQLANFVAIIRKHAAPYMPAIFTIIADAWKEDISVKMVVIEVLTDMGTAIGNDFSKYTGELIPYLLTVLQTDKTKERVLTVKVMESIQKLTHCIVQHLHLVLPPLLIILDDFSLKLSIRNTALSTVLHMTQQVDVSAYAPRMMQSWHHNISTAEMRDKLLLLLIEIIKQLGKFFDIFKRGVDQKLRDYNLDKSVHYEQYRKLAQRAQMSRDVLTSSVFAGSNGNIQYSSTQAGMRGQANNVYANNDLHERLMNGSIDSGASRQDNRDDYYRYGVEEKKEVPKVAPTTARPTSELVTVQITKQRLNKDALMPQWKNENLTSKDEWLQWLMKIRIGFLTYGSSPSLRAASSLGDQHPHLARDLFPAAFMSVWTELDSDVQNDLTSCLLRAISTGIPELIQTILNLAEFMDHSEKGPLPISHDVLGRWAEQTKAFAKACRYKEMSVLKKSGSMQTTFTRKVKLEPNDCQSLITYANKLNVQEEAAGVVRYAERNEMNFQMRGRWYEKLNEWEKALGAYELEEKKKSSCPNLQVYDEKDHLMTPEEAATAEEARMHEMRCLEALGRWDELNSKSVVWADQRGNRNDSVRDEINKKQLDHKMAVIAARGAWAVDNWERMADYVSVISENTQDGAMLRAVVAVHNDENTKAMGLIEKVREMIDSELTAMANESYERAYIPMVSVQQMAELEEAIEYKTRPERRPRIALLWSRRLQGCRRNVEQWQRLIMLRGLVLSPQEMHPLRVKFSSMCRKQGKNSMSRAVLRELLSLPANSDLVRAKAPFDKPLLVLALAKQLYQDDHKDEAIRALEDLANHWNKRINPIPKATGRELIPPSTKEPARICAKVLLKLGEWTELKSKTSNNMQVGELSFVRQQVSPQYRTKESRTPETIAFENTINYYQQATQYDPGWHKVWHKLASTHFYAVCRERPHPTTVISPPQQPQQPKKMHIPPVTRATSPPPPAQKSPQPAPFHSITEPLSVIIDYPVPPPLGSLVGLPPMPAYLSSNSSLPPQHHHVSPLSNDSPSNSAENKLYLKHAAHAVRCFAKALMCSPGSRLEDTLRLMQLWFDHGDDKDQDVYFALTETIFDLPVTTWLEAIPQLMARLDCPDDQKSVQLVLRVLCEIARHRPQAVIYALTVASRSKDVHRSKNAGTVLEKMMEYHSKLVREASLVTEELVRCAILWHEQWHDALDDASRVYFHRRLQDNNVQAMFDALRNMNDLMQKGAPTTMKEHSFQQTYSSDLKEAGRYVQAFESSGNVKDLNQAWEIYCSVFKKLRDQLATLNSLDLVYVSPNLVSAKDLELVVPGTYDPSAPIVSIQSFSSKMNVITSKQRPRKMVIRGSNGLDYQFLLKGHEDPRQDERVMQLFGLVNTLLANNSETCRRNLTIQRYSIVALSKDSGLIGWVPNCDTLHTLVKEYREKKAKIPLSIEHKTLQKLSLETEHLTLMQKLQLFESALSVTQGEDLRHVLWLKSPSSEVWFDRRTNYTRSVACMSMVGYILGLGDRHPSNLMLDRLTGKVVHIDFGDCFEVAMLREKFPERVPFRLTRMLINAMEVTGLDGVYNYTAERVLKMLRTNQESLLAVLEAFVYDPVINWRLVEGMKKDPKTRKDTGGRQNMAGAVLPSSSTTDSIMETIKRKLDGTEFVHTDGSTPPEPLQVTEQLAMLTEQATSPLNLCQSYIGWCPFW.

A disordered region spans residues 1-25 (MLQQHGISFQMNADRQNKAATTSNR). 7 HEAT repeats span residues 235-272 (LRVN…IVSQ), 649-687 (QTIY…PFLA), 689-726 (LAQP…LNPA), 731-768 (RLRL…QSPK), 815-853 (KNLK…STAY), 863-900 (SLLD…YTHK), and 1073-1110 (KYTG…LTHC). Residues 1438–2153 (VLGRWAEQTK…IYALTVASRS (716 aa)) enclose the FAT domain. Disordered regions lie at residues 1945–1981 (TVIS…PQPA) and 2017–2039 (SNSS…PSNS). The span at 1969–1981 (SPPPPAQKSPQPA) shows a compositional bias: pro residues. The segment covering 2030–2039 (PLSNDSPSNS) has biased composition (polar residues). In terms of domain architecture, PI3K/PI4K catalytic spans 2332 to 2647 (FSSKMNVITS…TTDSIMETIK (316 aa)). The G-loop stretch occupies residues 2338-2344 (VITSKQR). The catalytic loop stretch occupies residues 2512 to 2520 (GLGDRHPSN). Residues 2532–2557 (HIDFGDCFEVAMLREKFPERVPFRLT) are activation loop. The tract at residues 2615-2635 (DPKTRKDTGGRQNMAGAVLPS) is disordered. Positions 2665–2697 (EPLQVTEQLAMLTEQATSPLNLCQSYIGWCPFW) constitute an FATC domain.

The protein belongs to the PI3/PI4-kinase family. As to expression, ubiquitous. Expressed in all major tissues and organs, including the intestine, gonads and hypodermal cells. Expressed in neurons.

The protein resides in the nucleus. It carries out the reaction L-seryl-[protein] + ATP = O-phospho-L-seryl-[protein] + ADP + H(+). It catalyses the reaction L-threonyl-[protein] + ATP = O-phospho-L-threonyl-[protein] + ADP + H(+). Functionally, serine/threonine-protein kinase that regulates the mRNA translation machinery, probably by modulating the activity of translation factors such as eIF-4G and eIF-2. It may have some protein kinase activity instead of lipid kinase activity. May play a role in P-granule degradation by autophagy in somatic cells during embryogenesis. Required, during larval development, for the establishment of the proper number of germline progenitors, probably upstream of rsks-1 and ife-1. Required for larval development. May act as a mediator of lifespan regulation by insulin signaling and nutrient sensing. The protein is Target of rapamycin homolog of Caenorhabditis elegans.